The following is a 191-amino-acid chain: Probable GTP-binding protein EngB (191 aa).

The EngB-type G domain maps to 22–190 (RLPEIAFLGR…WQAITTTLQA (169 aa)). GTP contacts are provided by residues 30–37 (GRSNVGKS), 57–61 (GRTQT), 75–78 (DLPG), 142–145 (TKTD), and 169–171 (FSA). Residues Ser37 and Thr59 each contribute to the Mg(2+) site.

Belongs to the TRAFAC class TrmE-Era-EngA-EngB-Septin-like GTPase superfamily. EngB GTPase family. Mg(2+) serves as cofactor.

Functionally, necessary for normal cell division and for the maintenance of normal septation. The sequence is that of Probable GTP-binding protein EngB from Solibacter usitatus (strain Ellin6076).